The chain runs to 257 residues: Phosphonates import ATP-binding protein PhnC (257 aa).

The 245-residue stretch at 2 to 246 (IEFRNVSKVY…KFAEIYGDVA (245 aa)) folds into the ABC transporter domain. ATP is bound at residue 35 to 42 (GLSGAGKS).

Belongs to the ABC transporter superfamily. Phosphonates importer (TC 3.A.1.9.1) family. The complex is composed of two ATP-binding proteins (PhnC), two transmembrane proteins (PhnE) and a solute-binding protein (PhnD).

It localises to the cell membrane. It catalyses the reaction phosphonate(out) + ATP + H2O = phosphonate(in) + ADP + phosphate + H(+). Functionally, part of the ABC transporter complex PhnCDE involved in phosphonates import. Responsible for energy coupling to the transport system. This chain is Phosphonates import ATP-binding protein PhnC, found in Bacillus cereus (strain ATCC 14579 / DSM 31 / CCUG 7414 / JCM 2152 / NBRC 15305 / NCIMB 9373 / NCTC 2599 / NRRL B-3711).